A 236-amino-acid polypeptide reads, in one-letter code: Pyridoxine 5'-phosphate synthase (236 aa).

N6 serves as a coordination point for 3-amino-2-oxopropyl phosphate. 8 to 9 (DH) is a binding site for 1-deoxy-D-xylulose 5-phosphate. R17 provides a ligand contact to 3-amino-2-oxopropyl phosphate. The active-site Proton acceptor is H42. 2 residues coordinate 1-deoxy-D-xylulose 5-phosphate: R44 and H49. The Proton acceptor role is filled by E69. T99 is a 1-deoxy-D-xylulose 5-phosphate binding site. The Proton donor role is filled by H190. 3-amino-2-oxopropyl phosphate contacts are provided by residues G191 and 212-213 (GH).

The protein belongs to the PNP synthase family. As to quaternary structure, homooctamer; tetramer of dimers.

Its subcellular location is the cytoplasm. The enzyme catalyses 3-amino-2-oxopropyl phosphate + 1-deoxy-D-xylulose 5-phosphate = pyridoxine 5'-phosphate + phosphate + 2 H2O + H(+). It functions in the pathway cofactor biosynthesis; pyridoxine 5'-phosphate biosynthesis; pyridoxine 5'-phosphate from D-erythrose 4-phosphate: step 5/5. In terms of biological role, catalyzes the complicated ring closure reaction between the two acyclic compounds 1-deoxy-D-xylulose-5-phosphate (DXP) and 3-amino-2-oxopropyl phosphate (1-amino-acetone-3-phosphate or AAP) to form pyridoxine 5'-phosphate (PNP) and inorganic phosphate. In Chlorobium phaeobacteroides (strain DSM 266 / SMG 266 / 2430), this protein is Pyridoxine 5'-phosphate synthase.